A 92-amino-acid chain; its full sequence is UPF0125 protein NMA1005 (92 aa).

This sequence belongs to the UPF0125 (RnfH) family.

This chain is UPF0125 protein NMA1005, found in Neisseria meningitidis serogroup A / serotype 4A (strain DSM 15465 / Z2491).